The primary structure comprises 241 residues: Oil body-associated protein 1B (241 aa).

Residues 1 to 12 (MEKAVHSSTTSG) show a composition bias toward polar residues. Residues 1-22 (MEKAVHSSTTSGPAVPGETTKT) form a disordered region.

Belongs to the OBAP family.

The protein is Oil body-associated protein 1B of Arabidopsis thaliana (Mouse-ear cress).